We begin with the raw amino-acid sequence, 256 residues long: 5'-nucleotidase SurE (256 aa).

The a divalent metal cation site is built by D8, D9, S40, and N94.

This sequence belongs to the SurE nucleotidase family. The cofactor is a divalent metal cation.

It is found in the cytoplasm. The enzyme catalyses a ribonucleoside 5'-phosphate + H2O = a ribonucleoside + phosphate. Functionally, nucleotidase that shows phosphatase activity on nucleoside 5'-monophosphates. In Wolbachia pipientis subsp. Culex pipiens (strain wPip), this protein is 5'-nucleotidase SurE.